Reading from the N-terminus, the 23-residue chain is MIGIADVKLLNLGMLFPFVEVES.

The protein resides in the plastid. The protein localises to the chloroplast. This is an uncharacterized protein from Zea mays (Maize).